Here is a 434-residue protein sequence, read N- to C-terminus: Evolutionarily conserved signaling intermediate in Toll pathway, mitochondrial (434 aa).

The transit peptide at 1 to 48 (MSWVQVNLLARGLSRGWGSICRTVLSGTPFAQPSLQARGLHCSAVTHK) directs the protein to the mitochondrion. K371 is covalently cross-linked (Glycyl lysine isopeptide (Lys-Gly) (interchain with G-Cter in ubiquitin)). The disordered stretch occupies residues 403-434 (TRLEGQSPPHSPPKGPEEDDEAIQAQQRQGQS).

It belongs to the ECSIT family. Interacts with MAP3K1, SMAD4 and TRAF6. Interacts with SMAD1 only after BMP4-treatment. Part of the mitochondrial complex I assembly/MCIA complex that comprises at least the core subunits TMEM126B, NDUFAF1, ECSIT and ACAD9 and complement subunits such as COA1 and TMEM186. Interacts with NDUFAF1. Interacts with ACAD9. Interacts with TRIM59. Interacts with TMEM70 and TMEM242. Interacts (when ubiquitinated) with NF-kappa-B subunits RELA and NFKB1. Interacts with RIGI, IFIT1 and MAVS; these interactions promote RLR-mediated type I IFN induction. Interacts with SQSTM1; this interaction inhibits TLR4 signaling via functional regulation of the TRAF6-ECSIT complex. Interacts with cereblon/CRBN; this interaction inhibits the ubiquitination of ECSIT. Post-translationally, ubiquitinated on Lys-371; leading to translocation in the nucleus together with RELA and NFKB1 and expression of NF-kappa-B-dependent genes.

The protein resides in the cytoplasm. Its subcellular location is the nucleus. It localises to the mitochondrion. Functionally, adapter protein that plays a role in different signaling pathways including TLRs and IL-1 pathways or innate antiviral induction signaling. Plays a role in the activation of NF-kappa-B by forming a signal complex with TRAF6 and TAK1/MAP3K7 to activate TAK1/MAP3K7 leading to activation of IKKs. Once ubiquitinated, interacts with the dissociated RELA and NFKB1 proteins and translocates to the nucleus where it induces NF-kappa-B-dependent gene expression. Plays a role in innate antiviral immune response by bridging the pattern recognition receptors RIGI and MDA5/IFIT1 to the MAVS complex at the mitochondrion. Promotes proteolytic activation of MAP3K1. Involved in the BMP signaling pathway. Required for normal embryonic development. As part of the MCIA complex, involved in the assembly of the mitochondrial complex I. This is Evolutionarily conserved signaling intermediate in Toll pathway, mitochondrial from Rattus norvegicus (Rat).